A 312-amino-acid polypeptide reads, in one-letter code: NADH-ubiquinone oxidoreductase chain 1 (312 aa).

The next 8 membrane-spanning stretches (helical) occupy residues 3-23, 77-97, 104-124, 150-170, 174-194, 226-246, 250-270, and 289-309; these read FILS…SVAF, ISPI…PFFV, LGGL…MVAG, LALI…VYFF, IYVW…TISL, LIFM…CVIF, DVFN…FIWA, and CFLS…ILLF.

This sequence belongs to the complex I subunit 1 family.

It is found in the mitochondrion inner membrane. It catalyses the reaction a ubiquinone + NADH + 5 H(+)(in) = a ubiquinol + NAD(+) + 4 H(+)(out). Core subunit of the mitochondrial membrane respiratory chain NADH dehydrogenase (Complex I) that is believed to belong to the minimal assembly required for catalysis. Complex I functions in the transfer of electrons from NADH to the respiratory chain. The immediate electron acceptor for the enzyme is believed to be ubiquinone. The sequence is that of NADH-ubiquinone oxidoreductase chain 1 (mt:ND1) from Drosophila subobscura (Fruit fly).